The chain runs to 300 residues: Protein N-terminal and lysine N-methyltransferase EFM7 (300 aa).

S-adenosyl-L-methionine contacts are provided by residues W75, 101-103, D123, W156, and S179; that span reads GAG.

This sequence belongs to the class I-like SAM-binding methyltransferase superfamily. EFM7 family.

The protein localises to the cytoplasm. Functionally, S-adenosyl-L-methionine-dependent protein methyltransferase that trimethylates the N-terminal glycine 'Gly-2' of elongation factor 1-alpha, before also catalyzing the mono- and dimethylation of 'Lys-3'. The polypeptide is Protein N-terminal and lysine N-methyltransferase EFM7 (Cryptococcus neoformans var. neoformans serotype D (strain JEC21 / ATCC MYA-565) (Filobasidiella neoformans)).